Here is a 199-residue protein sequence, read N- to C-terminus: Recombination protein RecR (199 aa).

The C4-type zinc finger occupies C58–C73. In terms of domain architecture, Toprim spans S81–P176.

Belongs to the RecR family.

Its function is as follows. May play a role in DNA repair. It seems to be involved in an RecBC-independent recombinational process of DNA repair. It may act with RecF and RecO. This Thermoanaerobacter pseudethanolicus (strain ATCC 33223 / 39E) (Clostridium thermohydrosulfuricum) protein is Recombination protein RecR.